The sequence spans 299 residues: ATP phosphoribosyltransferase (299 aa).

Belongs to the ATP phosphoribosyltransferase family. Long subfamily. In terms of assembly, equilibrium between an active dimeric form, an inactive hexameric form and higher aggregates. Interconversion between the various forms is largely reversible and is influenced by the natural substrates and inhibitors of the enzyme. Mg(2+) is required as a cofactor.

It is found in the cytoplasm. The catalysed reaction is 1-(5-phospho-beta-D-ribosyl)-ATP + diphosphate = 5-phospho-alpha-D-ribose 1-diphosphate + ATP. Its pathway is amino-acid biosynthesis; L-histidine biosynthesis; L-histidine from 5-phospho-alpha-D-ribose 1-diphosphate: step 1/9. With respect to regulation, feedback inhibited by histidine. Its function is as follows. Catalyzes the condensation of ATP and 5-phosphoribose 1-diphosphate to form N'-(5'-phosphoribosyl)-ATP (PR-ATP). Has a crucial role in the pathway because the rate of histidine biosynthesis seems to be controlled primarily by regulation of HisG enzymatic activity. The sequence is that of ATP phosphoribosyltransferase from Serratia proteamaculans (strain 568).